A 126-amino-acid chain; its full sequence is Histone H2B type F-S (126 aa).

A compositionally biased stretch (low complexity) spans 1–12 (MPEPAKSAPAPK). Positions 1-36 (MPEPAKSAPAPKKGSKKAVTKAQKKDGRKRKRSRKE) are disordered. Pro-2 carries the N-acetylproline modification. Residue Glu-3 is modified to ADP-ribosyl glutamic acid. Lys-6 bears the N6-(2-hydroxyisobutyryl)lysine; alternate mark. Lys-6 is modified (N6-(beta-hydroxybutyryl)lysine; alternate). Lys-6 is subject to N6-acetyllysine; alternate. Residue Lys-6 is modified to N6-butyryllysine; alternate. Residue Lys-6 is modified to N6-crotonyllysine; alternate. An N6-lactoyllysine; alternate modification is found at Lys-6. Lys-6 participates in a covalent cross-link: Glycyl lysine isopeptide (Lys-Gly) (interchain with G-Cter in SUMO2); alternate. Ser-7 bears the ADP-ribosylserine mark. An N6-(beta-hydroxybutyryl)lysine; alternate modification is found at Lys-12. N6-acetyllysine; alternate occurs at positions 12 and 13. 2 positions are modified to N6-crotonyllysine; alternate: Lys-12 and Lys-13. Position 12 is an N6-lactoyllysine; alternate (Lys-12). N6-(2-hydroxyisobutyryl)lysine; alternate is present on Lys-13. Ser-15 bears the Phosphoserine; by STK4/MST1 mark. An N6-acetyllysine; alternate mark is found at Lys-16, Lys-17, Lys-21, and Lys-24. An N6-crotonyllysine; alternate mark is found at Lys-16, Lys-17, Lys-21, and Lys-24. N6-lactoyllysine; alternate occurs at positions 16, 17, 21, and 24. N6-(beta-hydroxybutyryl)lysine; alternate is present on residues Lys-17 and Lys-21. Residue Lys-17 is modified to N6-glutaryllysine; alternate. 2 positions are modified to N6-(2-hydroxyisobutyryl)lysine; alternate: Lys-21 and Lys-24. An N6-butyryllysine; alternate modification is found at Lys-21. Lys-21 participates in a covalent cross-link: Glycyl lysine isopeptide (Lys-Gly) (interchain with G-Cter in SUMO2); alternate. Lys-25 carries the post-translational modification N6-(2-hydroxyisobutyryl)lysine. Lys-35 carries the N6-(2-hydroxyisobutyryl)lysine; alternate modification. Lys-35 carries the post-translational modification N6-(beta-hydroxybutyryl)lysine; alternate. Lys-35 is subject to N6-crotonyllysine; alternate. N6-glutaryllysine; alternate is present on Lys-35. An N6-succinyllysine; alternate modification is found at Lys-35. A Glycyl lysine isopeptide (Lys-Gly) (interchain with G-Cter in ubiquitin); alternate cross-link involves residue Lys-35. Glu-36 is modified (polyADP-ribosyl glutamic acid). At Ser-37 the chain carries Phosphoserine; by AMPK. 3 positions are modified to N6-(2-hydroxyisobutyryl)lysine; alternate: Lys-44, Lys-47, and Lys-58. Lys-44 is modified (N6-lactoyllysine; alternate). An N6-glutaryllysine; alternate mark is found at Lys-44 and Lys-47. Lys-47 carries the N6-methyllysine; alternate modification. Position 58 is an N6,N6-dimethyllysine; alternate (Lys-58). Position 80 is a dimethylated arginine (Arg-80). N6-(2-hydroxyisobutyryl)lysine; alternate is present on Lys-86. N6-(beta-hydroxybutyryl)lysine; alternate is present on Lys-86. Residue Lys-86 is modified to N6-acetyllysine; alternate. Lys-86 is subject to N6-lactoyllysine; alternate. Lys-86 carries the post-translational modification N6,N6,N6-trimethyllysine; alternate. Omega-N-methylarginine occurs at positions 87 and 93. Lys-109 is subject to N6-(2-hydroxyisobutyryl)lysine; alternate. N6-lactoyllysine; alternate is present on Lys-109. The residue at position 109 (Lys-109) is an N6-glutaryllysine; alternate. Lys-109 bears the N6-methyllysine; alternate mark. An O-linked (GlcNAc) serine glycan is attached at Ser-113. Thr-116 carries the post-translational modification Phosphothreonine. N6-(2-hydroxyisobutyryl)lysine; alternate is present on residues Lys-117 and Lys-121. An N6-(beta-hydroxybutyryl)lysine; alternate mark is found at Lys-117 and Lys-121. An N6-lactoyllysine; alternate mark is found at Lys-117 and Lys-121. Residues Lys-117 and Lys-121 each carry the N6-glutaryllysine; alternate modification. 2 positions are modified to N6-succinyllysine; alternate: Lys-117 and Lys-121. An N6-malonyllysine; alternate modification is found at Lys-117. Lys-117 bears the N6-methylated lysine; alternate mark. Residue Lys-121 forms a Glycyl lysine isopeptide (Lys-Gly) (interchain with G-Cter in ubiquitin); alternate linkage.

This sequence belongs to the histone H2B family. The nucleosome is a histone octamer containing two molecules each of H2A, H2B, H3 and H4 assembled in one H3-H4 heterotetramer and two H2A-H2B heterodimers. The octamer wraps approximately 147 bp of DNA. In terms of processing, monoubiquitination at Lys-35 (H2BK34Ub) by the MSL1/MSL2 dimer is required for histone H3 'Lys-4' (H3K4me) and 'Lys-79' (H3K79me) methylation and transcription activation at specific gene loci, such as HOXA9 and MEIS1 loci. Similarly, monoubiquitination at Lys-121 (H2BK120Ub) by the RNF20/40 complex gives a specific tag for epigenetic transcriptional activation and is also prerequisite for histone H3 'Lys-4' and 'Lys-79' methylation. It also functions cooperatively with the FACT dimer to stimulate elongation by RNA polymerase II. H2BK120Ub also acts as a regulator of mRNA splicing: deubiquitination by USP49 is required for efficient cotranscriptional splicing of a large set of exons. Phosphorylation at Ser-37 (H2BS36ph) by AMPK in response to stress promotes transcription. Phosphorylated on Ser-15 (H2BS14ph) by STK4/MST1 during apoptosis; which facilitates apoptotic chromatin condensation. Also phosphorylated on Ser-15 in response to DNA double strand breaks (DSBs), and in correlation with somatic hypermutation and immunoglobulin class-switch recombination. Post-translationally, glcNAcylation at Ser-113 promotes monoubiquitination of Lys-121. It fluctuates in response to extracellular glucose, and associates with transcribed genes. In terms of processing, ADP-ribosylated by PARP1 or PARP2 on Ser-7 (H2BS6ADPr) in response to DNA damage. H2BS6ADPr promotes recruitment of CHD1L. Mono-ADP-ribosylated on Glu-3 (H2BE2ADPr) by PARP3 in response to single-strand breaks. Poly ADP-ribosylation on Glu-36 (H2BE35ADPr) by PARP1 regulates adipogenesis: it inhibits phosphorylation at Ser-37 (H2BS36ph), thereby blocking expression of pro-adipogenetic genes. Crotonylation (Kcr) is specifically present in male germ cells and marks testis-specific genes in post-meiotic cells, including X-linked genes that escape sex chromosome inactivation in haploid cells. Crotonylation marks active promoters and enhancers and confers resistance to transcriptional repressors. It is also associated with post-meiotically activated genes on autosomes. Post-translationally, lactylated in macrophages by EP300/P300 by using lactoyl-CoA directly derived from endogenous or exogenous lactate, leading to stimulates gene transcription.

It is found in the nucleus. The protein resides in the chromosome. In terms of biological role, core component of nucleosome. Nucleosomes wrap and compact DNA into chromatin, limiting DNA accessibility to the cellular machineries which require DNA as a template. Histones thereby play a central role in transcription regulation, DNA repair, DNA replication and chromosomal stability. DNA accessibility is regulated via a complex set of post-translational modifications of histones, also called histone code, and nucleosome remodeling. Its function is as follows. Has broad antibacterial activity. May contribute to the formation of the functional antimicrobial barrier of the colonic epithelium, and to the bactericidal activity of amniotic fluid. The sequence is that of Histone H2B type F-S from Homo sapiens (Human).